A 281-amino-acid chain; its full sequence is Pantothenate synthetase (281 aa).

30–37 (MGYLHEGH) lines the ATP pocket. His-37 acts as the Proton donor in catalysis. Gln-61 contributes to the (R)-pantoate binding site. Gln-61 contacts beta-alanine. ATP is bound at residue 147–150 (GEKD). Gln-153 contacts (R)-pantoate. Residues Val-176 and 184–187 (MSSR) each bind ATP.

The protein belongs to the pantothenate synthetase family. In terms of assembly, homodimer.

It localises to the cytoplasm. It carries out the reaction (R)-pantoate + beta-alanine + ATP = (R)-pantothenate + AMP + diphosphate + H(+). The protein operates within cofactor biosynthesis; (R)-pantothenate biosynthesis; (R)-pantothenate from (R)-pantoate and beta-alanine: step 1/1. Catalyzes the condensation of pantoate with beta-alanine in an ATP-dependent reaction via a pantoyl-adenylate intermediate. The chain is Pantothenate synthetase from Desulfatibacillum aliphaticivorans.